Reading from the N-terminus, the 886-residue chain is Conserved oligomeric Golgi complex subunit 1 (886 aa).

Over residues 834-846 (SAERKSPIQEPVE) the composition is skewed to basic and acidic residues. The interval 834-886 (SAERKSPIQEPVEKTATTTPTRKSGGNGARKGDSSKSKSSAASFFGMSQEWFR) is disordered. Ser-839 bears the Phosphoserine mark. Residues 848–857 (TATTTPTRKS) show a composition bias toward polar residues.

This sequence belongs to the COG1 family. In terms of assembly, component of the conserved oligomeric Golgi complex which is composed of eight different subunits and is required for normal Golgi morphology and localization.

Its subcellular location is the golgi apparatus membrane. Functionally, required for normal Golgi function. This chain is Conserved oligomeric Golgi complex subunit 1, found in Drosophila melanogaster (Fruit fly).